Reading from the N-terminus, the 466-residue chain is Muscarinic acetylcholine receptor M2 (466 aa).

Over 1-22 (MNNSTNSSNNSLALTSPYKTFE) the chain is Extracellular. Residues Asn2, Asn3, Asn6, and Asn9 are each glycosylated (N-linked (GlcNAc...) asparagine). The helical transmembrane segment at 23–45 (VVFIVLVAGSLSLVTIIGNILVM) threads the bilayer. At 46-59 (VSIKVNRHLQTVNN) the chain is on the cytoplasmic side. The chain crosses the membrane as a helical span at residues 60–80 (YFLFSLACADLIIGVFSMNLY). The Extracellular portion of the chain corresponds to 81 to 97 (TLYTVIGYWPLGPVVCD). Residues Cys96 and Cys176 are joined by a disulfide bond. A helical membrane pass occupies residues 98–119 (LWLALDYVVSNASVMNLLIISF). Positions 120 to 122 (DRY) match the Important for signaling motif. Residues 120–139 (DRYFCVTKPLTYPVKRTTKM) lie on the Cytoplasmic side of the membrane. A helical transmembrane segment spans residues 140–162 (AGMMIAAAWVLSFILWAPAILFW). The Extracellular segment spans residues 163–184 (QFIVGVRTVEDGECYIQFFSNA). A helical transmembrane segment spans residues 185–209 (AVTFGTAIAAFYLPVIIMTVLYWHI). Topologically, residues 210-387 (SRASKSRIKK…PPSREKKVTR (178 aa)) are cytoplasmic. Residues 218–355 (KKDKKEPVAN…VVGSSGQNGD (138 aa)) form a disordered region. A Phosphoserine modification is found at Ser232. A compositionally biased stretch (basic and acidic residues) spans 254–270 (GLEHNKIQNGKAPRDPV). 3 stretches are compositionally biased toward polar residues: residues 284-293 (NDSTSVSAVA), 304-313 (DENTVSTSLG), and 334-353 (SDSC…SGQN). The helical transmembrane segment at 388 to 410 (TILAILLAFIITWAPYNVMVLIN) threads the bilayer. Topologically, residues 411-418 (TFCAPCIP) are extracellular. Cys413 and Cys416 are joined by a disulfide. Residues 419–442 (NTVWTIGYWLCYINSTINPACYAL) form a helical membrane-spanning segment. The short motif at 436–440 (NPACY) is the Important for signaling element. Residues 443–466 (CNATFKKTFKHLLMCHYKNIGATR) are Cytoplasmic-facing. A phosphothreonine mark is found at Thr446, Thr450, and Thr465.

This sequence belongs to the G-protein coupled receptor 1 family. Muscarinic acetylcholine receptor subfamily. CHRM2 sub-subfamily. In terms of assembly, interacts with ARRB1 and ARRB2. Interacts with RACK1; the interaction regulates CHRM2 internalization. In terms of processing, phosphorylated in response to agonist treatment.

It is found in the cell membrane. Its subcellular location is the postsynaptic cell membrane. Functionally, the muscarinic acetylcholine receptor mediates various cellular responses, including inhibition of adenylate cyclase, breakdown of phosphoinositides and modulation of potassium channels through the action of G proteins. Primary transducing effect is adenylate cyclase inhibition. Signaling promotes phospholipase C activity, leading to the release of inositol trisphosphate (IP3); this then triggers calcium ion release into the cytosol. The sequence is that of Muscarinic acetylcholine receptor M2 (CHRM2) from Homo sapiens (Human).